A 267-amino-acid chain; its full sequence is Cerberus (267 aa).

The first 17 residues, Met-1–Thr-17, serve as a signal peptide directing secretion. Disordered regions lie at residues Arg-19–Glu-52 and Trp-87–Ile-113. N-linked (GlcNAc...) asparagine glycosylation is present at Asn-26. Residues Lys-88–Asp-101 are compositionally biased toward basic and acidic residues. 4 disulfide bridges follow: Cys-162-Cys-209, Cys-176-Cys-223, Cys-186-Cys-239, and Cys-190-Cys-241. Residues Cys-162–Glu-246 enclose the CTCK domain. N-linked (GlcNAc...) asparagine glycosylation is present at Asn-222.

This sequence belongs to the DAN family. Forms monomers and predominantly dimers. Post-translationally, N-glycosylated.

It localises to the secreted. Its function is as follows. Cytokine that may play a role in anterior neural induction and somite formation during embryogenesis in part through a BMP-inhibitory mechanism. Can regulate Nodal signaling during gastrulation as well as the formation and patterning of the primitive streak. This Homo sapiens (Human) protein is Cerberus (CER1).